The sequence spans 308 residues: Probable GTP 3',8-cyclase (308 aa).

A Radical SAM core domain is found at 4-224 (RFGRPLEDLR…QIRKKHFRPR (221 aa)). A GTP-binding site is contributed by Arg-13. [4Fe-4S] cluster is bound by residues Cys-20, Cys-24, and Cys-27. Lys-60 contributes to the GTP binding site. Position 64 (Gly-64) interacts with S-adenosyl-L-methionine. Thr-90 is a GTP binding site. Ser-114 serves as a coordination point for S-adenosyl-L-methionine. Lys-151 contacts GTP. Cys-245 and Cys-248 together coordinate [4Fe-4S] cluster. 250 to 252 (RIR) is a binding site for GTP. Cys-262 is a binding site for [4Fe-4S] cluster.

It belongs to the radical SAM superfamily. MoaA family. [4Fe-4S] cluster is required as a cofactor.

It carries out the reaction GTP + AH2 + S-adenosyl-L-methionine = (8S)-3',8-cyclo-7,8-dihydroguanosine 5'-triphosphate + 5'-deoxyadenosine + L-methionine + A + H(+). It participates in cofactor biosynthesis; molybdopterin biosynthesis. Its function is as follows. Catalyzes the cyclization of GTP to (8S)-3',8-cyclo-7,8-dihydroguanosine 5'-triphosphate. The protein is Probable GTP 3',8-cyclase of Saccharolobus islandicus (strain M.16.27) (Sulfolobus islandicus).